The chain runs to 154 residues: Ribosome maturation factor RimP (154 aa).

Belongs to the RimP family.

It localises to the cytoplasm. Required for maturation of 30S ribosomal subunits. This chain is Ribosome maturation factor RimP, found in Prochlorococcus marinus (strain MIT 9313).